Reading from the N-terminus, the 367-residue chain is DNA replication and repair protein RecF (367 aa).

ATP is bound at residue 30 to 37; that stretch reads GSNGSGKT.

It belongs to the RecF family.

The protein localises to the cytoplasm. The RecF protein is involved in DNA metabolism; it is required for DNA replication and normal SOS inducibility. RecF binds preferentially to single-stranded, linear DNA. It also seems to bind ATP. The protein is DNA replication and repair protein RecF of Pseudomonas putida (strain ATCC 700007 / DSM 6899 / JCM 31910 / BCRC 17059 / LMG 24140 / F1).